We begin with the raw amino-acid sequence, 95 residues long: Glycophorin-C (95 aa).

Topologically, residues 1–25 (MSSPVRTPPPERLEPNPGMSYAVME) are extracellular. Residues 26–46 (IAIIAAVITAVALVLVCLLFL) form a helical; Signal-anchor for type III membrane protein membrane-spanning segment. The Cytoplasmic segment spans residues 47-95 (MLRYLYRHKGTYYTNEAKGTEFAESADAALQSDPALQDAGDTSKKEYFI). Phosphoserine occurs at positions 71, 78, and 89.

It belongs to the glycophorin-C family.

Its subcellular location is the cell membrane. In Rattus norvegicus (Rat), this protein is Glycophorin-C (Gypc).